The sequence spans 298 residues: 5'-AMP-activated protein kinase subunit beta (298 aa).

The segment at 1-98 is disordered; that stretch reads MGNVQSQEGE…KTHQPYSGPC (98 aa). Over residues 19 to 30 the composition is skewed to polar residues; the sequence is QDATTTPDNANN. Acidic residues predominate over residues 48–59; sequence LNQEGEMSDDNQ. The span at 60-77 shows a compositional bias: polar residues; that stretch reads QEGGNNRTSQNGTSGSSG. Positions 78 to 91 are enriched in basic residues; that stretch reads HTKRRSQTSGKKTH. 250–252 contacts ADP; that stretch reads DQS.

The protein belongs to the 5'-AMP-activated protein kinase beta subunit family. As to quaternary structure, AMPK is a heterotrimer of an alpha catalytic subunit (ssp2), a beta (amk2) and a gamma non-catalytic subunits (cbs2). The beta subunit serves as a bridge between the catalytic and the regulatory subunit.

It is found in the cytoplasm. Functionally, beta subunit of AMP-activated protein kinase (AMPK), which is required for transcriptional, metabolic, and developmental adaptations in response to glucose limitation. Has a structural role, mediating heterotrimer formation, and a regulatory role, defining carbon source-regulated subcellular location and substrate specificity of the AMPK kinase complex. This chain is 5'-AMP-activated protein kinase subunit beta (amk2), found in Schizosaccharomyces pombe (strain 972 / ATCC 24843) (Fission yeast).